We begin with the raw amino-acid sequence, 194 residues long: MKEWIVATKNKGKVAEFEAILGKRGFSVKSLLDYPAIEDIEETGSTFNENATIKAEAIAERFQRPVLADDSGLIIDALDGRPGIFSARYAGEEKDDQKNIEKVLRELQDIPWKARTARFHCSIALARPQAETIVFEGTCEGYITTEPKGTGGFGYDPIFYVPSHDKTMAELTQEEKNKLSHRYHALKQLDKWLD.

Residue 8–13 (TKNKGK) participates in substrate binding. The Mg(2+) site is built by Glu41 and Asp70. Catalysis depends on Asp70, which acts as the Proton acceptor. Residues Ser71, 153–156 (FGYD), Lys176, and 181–182 (HR) contribute to the substrate site.

The protein belongs to the HAM1 NTPase family. As to quaternary structure, homodimer. It depends on Mg(2+) as a cofactor.

It catalyses the reaction XTP + H2O = XMP + diphosphate + H(+). The catalysed reaction is dITP + H2O = dIMP + diphosphate + H(+). It carries out the reaction ITP + H2O = IMP + diphosphate + H(+). Pyrophosphatase that catalyzes the hydrolysis of nucleoside triphosphates to their monophosphate derivatives, with a high preference for the non-canonical purine nucleotides XTP (xanthosine triphosphate), dITP (deoxyinosine triphosphate) and ITP. Seems to function as a house-cleaning enzyme that removes non-canonical purine nucleotides from the nucleotide pool, thus preventing their incorporation into DNA/RNA and avoiding chromosomal lesions. This is dITP/XTP pyrophosphatase from Halalkalibacterium halodurans (strain ATCC BAA-125 / DSM 18197 / FERM 7344 / JCM 9153 / C-125) (Bacillus halodurans).